A 417-amino-acid polypeptide reads, in one-letter code: Gamma-glutamyl phosphate reductase (417 aa).

The protein belongs to the gamma-glutamyl phosphate reductase family.

It localises to the cytoplasm. It catalyses the reaction L-glutamate 5-semialdehyde + phosphate + NADP(+) = L-glutamyl 5-phosphate + NADPH + H(+). The protein operates within amino-acid biosynthesis; L-proline biosynthesis; L-glutamate 5-semialdehyde from L-glutamate: step 2/2. Its function is as follows. Catalyzes the NADPH-dependent reduction of L-glutamate 5-phosphate into L-glutamate 5-semialdehyde and phosphate. The product spontaneously undergoes cyclization to form 1-pyrroline-5-carboxylate. The sequence is that of Gamma-glutamyl phosphate reductase from Escherichia coli (strain SMS-3-5 / SECEC).